The chain runs to 860 residues: Alanine--tRNA ligase (860 aa).

Residues histidine 563, histidine 567, cysteine 665, and histidine 669 each contribute to the Zn(2+) site. The tract at residues 824 to 843 is disordered; sequence VGGKGGGRPDMAQAGGTDSS.

Belongs to the class-II aminoacyl-tRNA synthetase family. The cofactor is Zn(2+).

It localises to the cytoplasm. The enzyme catalyses tRNA(Ala) + L-alanine + ATP = L-alanyl-tRNA(Ala) + AMP + diphosphate. Its function is as follows. Catalyzes the attachment of alanine to tRNA(Ala) in a two-step reaction: alanine is first activated by ATP to form Ala-AMP and then transferred to the acceptor end of tRNA(Ala). Also edits incorrectly charged Ser-tRNA(Ala) and Gly-tRNA(Ala) via its editing domain. This chain is Alanine--tRNA ligase, found in Vibrio vulnificus (strain YJ016).